A 577-amino-acid polypeptide reads, in one-letter code: MGKLIKLITTLTVLVSLLQYCCEFNSGSISCERTQTLCHYTNPRVWNTYFSRNCELYKNKVSPGFDIVARKYDTAVKPVIDDATVKVNKAAIQPAFKVIHSQCKKWNCGKYYQLVRSPMVKTRRFFFAKYNAFVKPNLDKFFTAEFRSHLKERILKYKNIGHYYFTITSRCIKSKYDFTVGNTEEKLMGKFKNKDTHGIHGSVTREPSSEDMVLTVSTMESDEEELTTTSTQTVVETITLDQEEASAVANHAHDDEASTDVEGSTDVNVNEQALLQEDFDMWSETILQKTQDVIQLFEKDVSKYINGKLVEEANHFKAKFQSLDDKSKKFFSKISLAINDIECVEGIDSETGKKIFFDKSGSTEISQYITRELVREYFNETRSTLDELTNAMEKDLSEITDEIEKKVNAIREENVEVFEEWGDIIVNEWSKRMAYVDVINAHMGADDDTTLDEEKAKSSVNWKKFLKGKKQIIESRDKLAHHSADLSRVNAFRQKVQKKILSFTQESGEFLYILRSKANLQFQERERKERERKEREKAAAEEFQRQQELLRQQEEEDEEDVSYTSTSTITTTTTMTL.

A signal peptide spans 1–23 (MGKLIKLITTLTVLVSLLQYCCE). Coiled-coil stretches lie at residues 379–416 (NETRSTLDELTNAMEKDLSEITDEIEKKVNAIREENVE) and 513–561 (ILRS…EEDV). Positions 525-545 (RERKERERKEREKAAAEEFQR) are enriched in basic and acidic residues. A disordered region spans residues 525 to 577 (RERKERERKEREKAAAEEFQRQQELLRQQEEEDEEDVSYTSTSTITTTTTMTL). The span at 562–577 (SYTSTSTITTTTTMTL) shows a compositional bias: low complexity.

It belongs to the SHE10 family. Component of the mitochondria-localized RNase mitochondrial RNA-processing (RNase MRP) composed of one single RNA encoded by the NME1 gene and at least 31 proteins. Absent in the nucleus-localized RNase MRP (NuMRP).

The protein localises to the mitochondrion. Involved in spore wall assembly. May be a component of the mitochondrial RNase MRP (MtMRP), a ribonucleoprotein endoribonuclease involved in the cleaving RNA transcripts to generate primers for DNA replication in mitochondria. In Saccharomyces cerevisiae (strain Lalvin EC1118 / Prise de mousse) (Baker's yeast), this protein is Outer spore wall assembly protein SHE10.